The primary structure comprises 396 residues: Acetate kinase (396 aa).

Asn8 provides a ligand contact to Mg(2+). Lys15 is an ATP binding site. Arg89 contributes to the substrate binding site. Residue Asp146 is the Proton donor/acceptor of the active site. ATP-binding positions include His206–Gly210, Asp283–Arg285, and Gly331–Asn335. Glu383 is a Mg(2+) binding site.

This sequence belongs to the acetokinase family. In terms of assembly, homodimer. Mg(2+) is required as a cofactor. It depends on Mn(2+) as a cofactor.

It is found in the cytoplasm. It carries out the reaction acetate + ATP = acetyl phosphate + ADP. It participates in metabolic intermediate biosynthesis; acetyl-CoA biosynthesis; acetyl-CoA from acetate: step 1/2. Its function is as follows. Catalyzes the formation of acetyl phosphate from acetate and ATP. Can also catalyze the reverse reaction. The chain is Acetate kinase from Streptococcus pneumoniae (strain ATCC 700669 / Spain 23F-1).